The primary structure comprises 221 residues: GTPase Obg (221 aa).

Positions 1–61 (PSALRLVLLN…LKYKLLEIVQ (61 aa)) constitute an OBG-type G domain. Residues 10–13 (NKAD) and 42–44 (SAV) each bind GTP. Residues 82–162 (VVHRTKGQFQ…IGGISFEWEP (81 aa)) form the OCT domain.

This sequence belongs to the TRAFAC class OBG-HflX-like GTPase superfamily. OBG GTPase family. In terms of assembly, monomer. Mg(2+) serves as cofactor.

It localises to the cytoplasm. Its function is as follows. An essential GTPase which binds GTP, GDP and possibly (p)ppGpp with moderate affinity, with high nucleotide exchange rates and a fairly low GTP hydrolysis rate. Plays a role in control of the cell cycle, stress response, ribosome biogenesis and in those bacteria that undergo differentiation, in morphogenesis control. The sequence is that of GTPase Obg from Corynebacterium melassecola.